The sequence spans 164 residues: Ribosome maturation factor RimM (164 aa).

A PRC barrel domain is found at 90-161 (EGRYYVADII…EIIIKPVKTW (72 aa)).

The protein belongs to the RimM family. In terms of assembly, binds ribosomal protein uS19.

The protein resides in the cytoplasm. Its function is as follows. An accessory protein needed during the final step in the assembly of 30S ribosomal subunit, possibly for assembly of the head region. Essential for efficient processing of 16S rRNA. May be needed both before and after RbfA during the maturation of 16S rRNA. It has affinity for free ribosomal 30S subunits but not for 70S ribosomes. In Clostridium tetani (strain Massachusetts / E88), this protein is Ribosome maturation factor RimM.